A 103-amino-acid polypeptide reads, in one-letter code: Pyrimidine/purine nucleoside phosphorylase (103 aa).

This sequence belongs to the nucleoside phosphorylase PpnP family.

The catalysed reaction is a purine D-ribonucleoside + phosphate = a purine nucleobase + alpha-D-ribose 1-phosphate. It carries out the reaction adenosine + phosphate = alpha-D-ribose 1-phosphate + adenine. The enzyme catalyses cytidine + phosphate = cytosine + alpha-D-ribose 1-phosphate. It catalyses the reaction guanosine + phosphate = alpha-D-ribose 1-phosphate + guanine. The catalysed reaction is inosine + phosphate = alpha-D-ribose 1-phosphate + hypoxanthine. It carries out the reaction thymidine + phosphate = 2-deoxy-alpha-D-ribose 1-phosphate + thymine. The enzyme catalyses uridine + phosphate = alpha-D-ribose 1-phosphate + uracil. It catalyses the reaction xanthosine + phosphate = alpha-D-ribose 1-phosphate + xanthine. Its function is as follows. Catalyzes the phosphorolysis of diverse nucleosides, yielding D-ribose 1-phosphate and the respective free bases. Can use uridine, adenosine, guanosine, cytidine, thymidine, inosine and xanthosine as substrates. Also catalyzes the reverse reactions. This chain is Pyrimidine/purine nucleoside phosphorylase, found in Dechloromonas aromatica (strain RCB).